We begin with the raw amino-acid sequence, 184 residues long: Glutathione-regulated potassium-efflux system ancillary protein KefG (184 aa).

This sequence belongs to the NAD(P)H dehydrogenase (quinone) family. KefG subfamily. In terms of assembly, interacts with KefB.

The protein localises to the cell inner membrane. It carries out the reaction a quinone + NADH + H(+) = a quinol + NAD(+). It catalyses the reaction a quinone + NADPH + H(+) = a quinol + NADP(+). Regulatory subunit of a potassium efflux system that confers protection against electrophiles. Required for full activity of KefB. The polypeptide is Glutathione-regulated potassium-efflux system ancillary protein KefG (Escherichia coli O1:K1 / APEC).